The chain runs to 161 residues: Epididymal protein 13 (161 aa).

The N-terminal stretch at 1–23 (MHRSEPFLKMSLLILLFLGLAEA) is a signal peptide. A glycan (N-linked (GlcNAc...) asparagine) is linked at N56.

It localises to the secreted. The polypeptide is Epididymal protein 13 (Homo sapiens (Human)).